The chain runs to 642 residues: Sodium-dependent phosphate transport protein 2A (642 aa).

At methionine 1 to lysine 106 the chain is on the cytoplasmic side. Residues serine 14 and serine 37 each carry the phosphoserine modification. Residues leucine 107–phenylalanine 128 form a helical membrane-spanning segment. Over glutamine 129 to asparagine 148 the chain is Extracellular. The helical transmembrane segment at proline 149–serine 166 threads the bilayer. The Cytoplasmic segment spans residues serine 167–threonine 168. A helical membrane pass occupies residues alanine 169 to isoleucine 188. Topologically, residues proline 189–aspartate 350 are extracellular. Cystine bridges form between cysteine 228-cysteine 525 and cysteine 309-cysteine 339. N-linked (GlcNAc...) asparagine glycans are attached at residues asparagine 301, asparagine 326, and asparagine 333. The helical transmembrane segment at leucine 351 to valine 373 threads the bilayer. The Cytoplasmic segment spans residues lysine 374–methionine 415. The helical transmembrane segment at threonine 416–serine 439 threads the bilayer. Over isoleucine 440–lysine 469 the chain is Extracellular. Residues leucine 470 to leucine 490 traverse the membrane as a helical segment. Residues tryptophan 491 to tryptophan 516 lie on the Cytoplasmic side of the membrane. A Phosphothreonine; by PKC modification is found at threonine 511. The helical transmembrane segment at phenylalanine 517 to serine 537 threads the bilayer. Over methionine 538 to arginine 542 the chain is Extracellular. Residues alanine 543–leucine 564 traverse the membrane as a helical segment. Residues glutamine 565–leucine 642 lie on the Cytoplasmic side of the membrane. Phosphoserine is present on serine 610. Residue threonine 626 is modified to Phosphothreonine. Position 628 is a phosphoserine (serine 628).

It belongs to the SLC34A transporter family. In terms of assembly, interacts via its C-terminal region with NHERF4. Interacts with NHERF1. Interacts with TMEM174; regulates SLC34A1 internalization by PTH and FGF23. Expressed in the kidney cortex.

It localises to the apical cell membrane. The protein resides in the cell membrane. It carries out the reaction 3 Na(+)(out) + phosphate(out) = 3 Na(+)(in) + phosphate(in). Its activity is regulated as follows. Transport activity is significantly increased in response to dietary phosphate deprivation. Functionally, involved in actively transporting phosphate into cells via Na(+) cotransport in the renal brush border membrane. The cotransport has a Na(+):Pi stoichiometry of 3:1 and is electrogenic. The polypeptide is Sodium-dependent phosphate transport protein 2A (Oryctolagus cuniculus (Rabbit)).